Consider the following 442-residue polypeptide: Protein bangles and beads (442 aa).

The tract at residues 47–442 (AVEPAPLKPE…SEESSESKEN (396 aa)) is disordered. Basic and acidic residues-rich tracts occupy residues 55–67 (PEAE…KTIE), 114–125 (PEKKTLPEEAKP), and 133–146 (EAEK…RTEA). Residues 159-172 (AIEQAPEAPAANAE) show a composition bias toward low complexity. Basic and acidic residues-rich tracts occupy residues 177–194 (VVDE…KSAE) and 204–240 (AEKE…EPAK). 2 stretches are compositionally biased toward low complexity: residues 241–255 (AAEA…AATK) and 272–288 (SSPA…AAQA). The segment covering 329–339 (EAVKEQEKEQP) has biased composition (basic and acidic residues). The span at 357 to 376 (TAAPAGAPEPTAAVAPAAVP) shows a compositional bias: low complexity. Residues 408–442 (EPKKSSEEKSDKSESKVDESSESKESEESSESKEN) are compositionally biased toward basic and acidic residues. Phosphoserine occurs at positions 430, 433, 436, and 437.

As to expression, expressed in the embryonic CNS, in sets of cells that are segmentally reiterated along the periphery of the nervous system.

May play an important role during development. This chain is Protein bangles and beads (bnb), found in Drosophila melanogaster (Fruit fly).